Here is a 462-residue protein sequence, read N- to C-terminus: Cysteine desulfurase, mitochondrial (462 aa).

Residues 132-133, Asn-212, Gln-240, and 260-262 contribute to the pyridoxal 5'-phosphate site; these read AT and SGH. An N6-(pyridoxal phosphate)lysine modification is found at Lys-263. Position 300 (Thr-300) interacts with pyridoxal 5'-phosphate. Cys-386 serves as the catalytic Cysteine persulfide intermediate. Residue Cys-386 coordinates [2Fe-2S] cluster.

This sequence belongs to the class-V pyridoxal-phosphate-dependent aminotransferase family. NifS/IscS subfamily. As to quaternary structure, component of the mitochondrial core iron-sulfur cluster (ISC) assembly complex at least composed of the cystein desulfurase Nfs1, the scaffold protein IscU, the accessory protein bcn92/Isd11/Lyrm4, and probably fh/frataxin. Interacts with bcn92/Isd11/Lyrm4 and IscU. Pyridoxal 5'-phosphate serves as cofactor. Ubiquitous expression at high levels in any life stage.

The protein resides in the mitochondrion. Its subcellular location is the nucleus. The catalysed reaction is (sulfur carrier)-H + L-cysteine = (sulfur carrier)-SH + L-alanine. Active when in complex with bcn92/Isd11/Lyrm4. L-cysteine binding kinetics are reduced in the presence of bcn92/Isd11/Lyrm4 and IscU. Activity is regulated by other components of the mitochondrial core iron-sulfur cluster (ISC) complex; Activity is reduced in the presence of IscU but enhanced when both IscU and fh/frataxin are present. Catalyzes the removal of elemental sulfur from cysteine to produce alanine. It supplies the inorganic sulfur for iron-sulfur (Fe-S) clusters. The protein is Cysteine desulfurase, mitochondrial of Drosophila melanogaster (Fruit fly).